The primary structure comprises 597 residues: Formate--tetrahydrofolate ligase (597 aa).

Residue 84 to 91 (TPLGEGKS) participates in ATP binding.

It belongs to the formate--tetrahydrofolate ligase family.

It catalyses the reaction (6S)-5,6,7,8-tetrahydrofolate + formate + ATP = (6R)-10-formyltetrahydrofolate + ADP + phosphate. It functions in the pathway one-carbon metabolism; tetrahydrofolate interconversion. This chain is Formate--tetrahydrofolate ligase, found in Dehalococcoides mccartyi (strain CBDB1).